Here is a 214-residue protein sequence, read N- to C-terminus: pH-sensitive calcium channel (214 aa).

The Cytoplasmic portion of the chain corresponds to 1 to 15 (MQATVHESKQSIMQR). Residues 16-37 (ILTVFVFTLLIATVGLFIGQFV) form a helical membrane-spanning segment. Residues 38 to 44 (PVALMLP) are Extracellular-facing. A helical membrane pass occupies residues 45 to 59 (LSILEVAMIILAFWM). At 60-66 (RRRKAVG) the chain is on the cytoplasmic side. A helical membrane pass occupies residues 67 to 86 (YAFVYTFAFVSGITLFPIVS). At 87–95 (HYASIAGAY) the chain is on the extracellular side. Residues 96-117 (VVLEAFGSTFVIFAVLGTIGAK) traverse the membrane as a helical segment. Residues 118 to 122 (MKKDL) are Cytoplasmic-facing. A helical membrane pass occupies residues 123-146 (SFLWSFLLVAVLALAVVGIFNIFS). Topologically, residues 147–151 (PLNSA) are extracellular. A helical membrane pass occupies residues 152–175 (AMMAYSVIGTIVFSLYILYDLNQI). Over 176–185 (KHRHITEDLI) the chain is Cytoplasmic. The chain crosses the membrane as a helical span at residues 186 to 207 (PVMALSLYLDFINLFINLLRFF). Over 208–214 (GILSSDD) the chain is Extracellular.

The protein belongs to the BI1 family. In terms of assembly, monomer.

The protein resides in the cell membrane. The enzyme catalyses Ca(2+)(in) = Ca(2+)(out). Its activity is regulated as follows. The calcium-release activity is mediated by two factors: pH and transmembrane ion gradient. It was proposed, based on an MD simulation, that the conserved aspartyl dyad (Asp-171-Asp-195) regulates Ca(2+) binding, pH sensing, and the channel pore opening and closing, and that protonation of Asp-171 probably weakens its interaction with Arg-60, facilitating the opening of the channel. Another study using nanodiscs suggests that Asp-171 is not a pH sensor regulating the pore dynamics; instead, it is only involved in the gating of calcium ions. When crystallized in detergents at different pH conditions, the transition between open and closed conformations is regulated by pH. Ca(2+) binding is inhibited by Na(+), K(+), Li(+), Yb(3+) and Lu(3+), but not by Mg(2+) and Mn(2+). Its function is as follows. Calcium channel that probably plays a role in the regulation of calcium homeostasis. Uptakes calcium ions and mediates calcium flux in proteoliposomes in a pH-dependent manner. When expressed in E.coli in the presence of high extracellular calcium concentrations, shows calcium-leak activity, increasing intracellular calcium concentration. It can also mediate Ca(2+) flux from the endoplamic reticulum (ER) when expressed in permeabilized mammalian cells. Calcium transport activity is also detected in ER-like lipid vesicles. In Bacillus subtilis (strain 168), this protein is pH-sensitive calcium channel.